The sequence spans 278 residues: 3-methyl-2-oxobutanoate hydroxymethyltransferase (278 aa).

Mg(2+) contacts are provided by Asp-43 and Asp-82. Residues 43 to 44, Asp-82, and Lys-112 contribute to the 3-methyl-2-oxobutanoate site; that span reads DS. A Mg(2+)-binding site is contributed by Glu-114. Glu-181 (proton acceptor) is an active-site residue.

It belongs to the PanB family. As to quaternary structure, homodecamer; pentamer of dimers. Mg(2+) is required as a cofactor.

Its subcellular location is the cytoplasm. The catalysed reaction is 3-methyl-2-oxobutanoate + (6R)-5,10-methylene-5,6,7,8-tetrahydrofolate + H2O = 2-dehydropantoate + (6S)-5,6,7,8-tetrahydrofolate. It functions in the pathway cofactor biosynthesis; (R)-pantothenate biosynthesis; (R)-pantoate from 3-methyl-2-oxobutanoate: step 1/2. In terms of biological role, catalyzes the reversible reaction in which hydroxymethyl group from 5,10-methylenetetrahydrofolate is transferred onto alpha-ketoisovalerate to form ketopantoate. The chain is 3-methyl-2-oxobutanoate hydroxymethyltransferase from Bacillus cereus (strain ATCC 14579 / DSM 31 / CCUG 7414 / JCM 2152 / NBRC 15305 / NCIMB 9373 / NCTC 2599 / NRRL B-3711).